The chain runs to 196 residues: 3-isopropylmalate dehydratase small subunit (196 aa).

It belongs to the LeuD family. LeuD type 1 subfamily. In terms of assembly, heterodimer of LeuC and LeuD.

The catalysed reaction is (2R,3S)-3-isopropylmalate = (2S)-2-isopropylmalate. It functions in the pathway amino-acid biosynthesis; L-leucine biosynthesis; L-leucine from 3-methyl-2-oxobutanoate: step 2/4. Its function is as follows. Catalyzes the isomerization between 2-isopropylmalate and 3-isopropylmalate, via the formation of 2-isopropylmaleate. The chain is 3-isopropylmalate dehydratase small subunit from Corynebacterium diphtheriae (strain ATCC 700971 / NCTC 13129 / Biotype gravis).